Here is a 305-residue protein sequence, read N- to C-terminus: Translation initiation factor eIF2B subunit alpha (305 aa).

Position 35 is an N6-acetyllysine (K35).

Belongs to the eIF-2B alpha/beta/delta subunits family. Component of the translation initiation factor 2B (eIF2B) complex which is a heterodecamer of two sets of five different subunits: alpha, beta, gamma, delta and epsilon. Subunits alpha, beta and delta comprise a regulatory subcomplex and subunits epsilon and gamma comprise a catalytic subcomplex. Within the complex, the hexameric regulatory complex resides at the center, with the two heterodimeric catalytic subcomplexes bound on opposite sides.

The protein resides in the cytoplasm. It localises to the cytosol. Its activity is regulated as follows. Activated by the chemical integrated stress response (ISR) inhibitor ISRIB which stimulates guanine nucleotide exchange factor activity for both phosphorylated and unphosphorylated eIF2. Its function is as follows. Acts as a component of the translation initiation factor 2B (eIF2B) complex, which catalyzes the exchange of GDP for GTP on eukaryotic initiation factor 2 (eIF2) gamma subunit. Its guanine nucleotide exchange factor activity is repressed when bound to eIF2 complex phosphorylated on the alpha subunit, thereby limiting the amount of methionyl-initiator methionine tRNA available to the ribosome and consequently global translation is repressed. The protein is Translation initiation factor eIF2B subunit alpha (Eif2b1) of Rattus norvegicus (Rat).